An 86-amino-acid chain; its full sequence is Neuropeptide precursor capa-1 (86 aa).

The signal sequence occupies residues 1–19 (MLLWIVATLLIFSLPVSTA).

Expressed in two pairs of neurons in the anterior part of the nervous system (at protein level).

In terms of biological role, encodes at least three neuropeptides: two of the periviscerokinin family (APHPSSALLVPYPRV-amide and LYMARV-amide) and one pyrokinin (AFFYTPRI-amide). Its function is as follows. Putative ligand for neuromedin U receptor homolog nmur-2. This is Neuropeptide precursor capa-1 from Caenorhabditis elegans.